The chain runs to 185 residues: Ribose 1,5-bisphosphate phosphokinase PhnN (185 aa).

G10 to D17 serves as a coordination point for ATP.

It belongs to the ribose 1,5-bisphosphokinase family.

The catalysed reaction is alpha-D-ribose 1,5-bisphosphate + ATP = 5-phospho-alpha-D-ribose 1-diphosphate + ADP. Its pathway is metabolic intermediate biosynthesis; 5-phospho-alpha-D-ribose 1-diphosphate biosynthesis; 5-phospho-alpha-D-ribose 1-diphosphate from D-ribose 5-phosphate (route II): step 3/3. In terms of biological role, catalyzes the phosphorylation of ribose 1,5-bisphosphate to 5-phospho-D-ribosyl alpha-1-diphosphate (PRPP). Accepts ATP but not GTP as a phosphoryl donor, and uses ribose 1,5-bisphosphate but not ribose, ribose 1-phosphate, or ribose 5-phosphate as a phosphoryl acceptor. The protein is Ribose 1,5-bisphosphate phosphokinase PhnN (phnN) of Escherichia coli (strain K12).